A 339-amino-acid polypeptide reads, in one-letter code: Formyl peptide receptor-related sequence 6 (339 aa).

The Extracellular portion of the chain corresponds to 1-23 (MEANFSIPQNGSEVVFYDSTTSR). Residues N4 and N10 are each glycosylated (N-linked (GlcNAc...) asparagine). Residues 24 to 44 (VICIFLVVVLSITFLLGVIGN) traverse the membrane as a helical segment. Residues 45–62 (GLVIYVAGFRMTHTVTTI) lie on the Cytoplasmic side of the membrane. The chain crosses the membrane as a helical span at residues 63–85 (CYLNLALSDFSYMASLPFQITSI). Residues 86–99 (VMNGEWLFGWFLCK) are Extracellular-facing. A disulfide bridge links C98 with C178. Residues 100–120 (FVHMIINVNLFLSIFLITFIA) traverse the membrane as a helical segment. The Cytoplasmic portion of the chain corresponds to 121–144 (MDRCICVLHPVWAQNHRTVNVATK). Residues 145 to 165 (VIFGAWILVLMLIFPHCIFVT) traverse the membrane as a helical segment. The Extracellular portion of the chain corresponds to 166 to 198 (TVKDESGKVHCICNFESWAATPEEQVKVSMTVS). A helical transmembrane segment spans residues 199–219 (LISVTISFIIGFSIPMIFIVI). At 220-241 (CYGLMAAKIGRRGFVNSSRPLR) the chain is on the cytoplasmic side. Residues 242-262 (VLTAVAISFFVCWFPFQLIFL) traverse the membrane as a helical segment. The Extracellular portion of the chain corresponds to 263-280 (LGNIGNKETQNNIDTWVN). Residues 281–301 (TASTLASFNSCLNPILYVFLG) form a helical membrane-spanning segment. Topologically, residues 302–339 (QQFRERLIYSLSASLERALREDSALNSDKTRNLSSQRL) are cytoplasmic.

Belongs to the G-protein coupled receptor 1 family. Expressed exclusively in vomeronasal tissue. Expressed in 1.2 % of a subset of sensory neurons located in the apical layer of the vomeronasal organ. Each neuron appears to express only one receptor gene. Expressed in brain, spleen, skeletal muscle and at high level in testis.

The protein localises to the membrane. Its function is as follows. May have an olfactory function associated with the identification of pathogens or of pathogenic states. In Mus musculus (Mouse), this protein is Formyl peptide receptor-related sequence 6 (Fpr-rs6).